The following is a 170-amino-acid chain: Ubiquitin-conjugating enzyme E2 G1 (170 aa).

Position 1 is an N-acetylmethionine (methionine 1). Threonine 2 carries the N-acetylthreonine; in Ubiquitin-conjugating enzyme E2 G1, N-terminally processed modification. A UBC core domain is found at 5-166; the sequence is QSALLLRRQL…VARCVRKSQE (162 aa). The active-site Glycyl thioester intermediate is cysteine 90.

Belongs to the ubiquitin-conjugating enzyme family. In terms of processing, autoubiquitinated in vitro. As to expression, widely expressed, mainly in skeletal muscle.

It catalyses the reaction S-ubiquitinyl-[E1 ubiquitin-activating enzyme]-L-cysteine + [E2 ubiquitin-conjugating enzyme]-L-cysteine = [E1 ubiquitin-activating enzyme]-L-cysteine + S-ubiquitinyl-[E2 ubiquitin-conjugating enzyme]-L-cysteine.. The protein operates within protein modification; protein ubiquitination. Functionally, accepts ubiquitin from the E1 complex and catalyzes its covalent attachment to other proteins. In vitro catalyzes 'Lys-48'-, as well as 'Lys-63'-linked polyubiquitination. May be involved in degradation of muscle-specific proteins. Mediates polyubiquitination of CYP3A4. The chain is Ubiquitin-conjugating enzyme E2 G1 (UBE2G1) from Homo sapiens (Human).